We begin with the raw amino-acid sequence, 492 residues long: N-succinylglutamate 5-semialdehyde dehydrogenase (492 aa).

Residue 220 to 225 (GSANTG) participates in NAD(+) binding. Catalysis depends on residues E243 and C277.

Belongs to the aldehyde dehydrogenase family. AstD subfamily.

It carries out the reaction N-succinyl-L-glutamate 5-semialdehyde + NAD(+) + H2O = N-succinyl-L-glutamate + NADH + 2 H(+). It participates in amino-acid degradation; L-arginine degradation via AST pathway; L-glutamate and succinate from L-arginine: step 4/5. Its function is as follows. Catalyzes the NAD-dependent reduction of succinylglutamate semialdehyde into succinylglutamate. The polypeptide is N-succinylglutamate 5-semialdehyde dehydrogenase (Escherichia coli O17:K52:H18 (strain UMN026 / ExPEC)).